Reading from the N-terminus, the 806-residue chain is Acetyl-CoA decarbonylase/synthase complex subunit alpha 1 (806 aa).

Residues Cys73, Cys76, Cys77, Cys79, Cys84, and Cys94 each coordinate [4Fe-4S] cluster. Position 117 (His117) interacts with CO. [Ni-4Fe-4S] cluster-binding residues include His250, Cys278, and Cys323. 2 consecutive 4Fe-4S ferredoxin-type domains span residues 407 to 436 (DEEF…IPEA) and 446 to 475 (SYLD…LNII). [4Fe-4S] cluster is bound by residues Cys417, Cys420, Cys423, Cys427, Cys455, Cys458, Cys461, and Cys465. Cys523, Cys552, and Cys587 together coordinate [Ni-4Fe-4S] cluster.

This sequence belongs to the Ni-containing carbon monoxide dehydrogenase family. Heterotetramer of two alpha and two epsilon subunits. The ACDS complex is made up of alpha, epsilon, beta, gamma and delta subunits with a probable stoichiometry of (alpha(2)epsilon(2))(4)-beta(8)-(gamma(1)delta(1))(8). [4Fe-4S] cluster is required as a cofactor. Requires [Ni-4Fe-4S] cluster as cofactor.

It carries out the reaction CO + 2 oxidized [2Fe-2S]-[ferredoxin] + H2O = 2 reduced [2Fe-2S]-[ferredoxin] + CO2 + 2 H(+). The protein operates within one-carbon metabolism; methanogenesis from acetate. Carbon monoxide dehydrogenase activity is inhibited by KCN and is rapidly inactivated by O(2). Part of the ACDS complex that catalyzes the reversible cleavage of acetyl-CoA, allowing growth on acetate as sole source of carbon and energy. The alpha-epsilon subcomponent functions as a carbon monoxide dehydrogenase. The polypeptide is Acetyl-CoA decarbonylase/synthase complex subunit alpha 1 (Methanosarcina barkeri (strain Fusaro / DSM 804)).